We begin with the raw amino-acid sequence, 201 residues long: Recombination protein RecR (201 aa).

Residues 57–72 (CECCRTLTEEPLCRIC) form a C4-type zinc finger. In terms of domain architecture, Toprim spans 81 to 176 (GVLCIVETPA…NTTRIAHGVP (96 aa)).

Belongs to the RecR family.

Functionally, may play a role in DNA repair. It seems to be involved in an RecBC-independent recombinational process of DNA repair. It may act with RecF and RecO. The protein is Recombination protein RecR of Idiomarina loihiensis (strain ATCC BAA-735 / DSM 15497 / L2-TR).